We begin with the raw amino-acid sequence, 37 residues long: MIIFNNLPSFFVPLVGLVFPAIAMASLSLHVQKNKIF.

The helical transmembrane segment at Leu-7–Leu-27 threads the bilayer.

Belongs to the PsaI family.

It localises to the plastid. The protein localises to the chloroplast thylakoid membrane. In terms of biological role, may help in the organization of the PsaL subunit. This chain is Photosystem I reaction center subunit VIII, found in Eucalyptus globulus subsp. globulus (Tasmanian blue gum).